The chain runs to 428 residues: tRNA modification GTPase MnmE (428 aa).

(6S)-5-formyl-5,6,7,8-tetrahydrofolate-binding residues include arginine 20, glutamate 77, and lysine 117. The TrmE-type G domain occupies 213–351; that stretch reads GFEIALVGAP…LLEKIRSVFS (139 aa). K(+) is bound at residue asparagine 223. GTP is bound by residues 223-228, 242-248, and 267-270; these read NAGKST, SEIAGTT, and DTAG. Serine 227 contacts Mg(2+). K(+) contacts are provided by serine 242, isoleucine 244, and threonine 247. Threonine 248 lines the Mg(2+) pocket. Residue lysine 428 coordinates (6S)-5-formyl-5,6,7,8-tetrahydrofolate.

Belongs to the TRAFAC class TrmE-Era-EngA-EngB-Septin-like GTPase superfamily. TrmE GTPase family. Homodimer. Heterotetramer of two MnmE and two MnmG subunits. It depends on K(+) as a cofactor.

It localises to the cytoplasm. Exhibits a very high intrinsic GTPase hydrolysis rate. Involved in the addition of a carboxymethylaminomethyl (cmnm) group at the wobble position (U34) of certain tRNAs, forming tRNA-cmnm(5)s(2)U34. The polypeptide is tRNA modification GTPase MnmE (Roseobacter denitrificans (strain ATCC 33942 / OCh 114) (Erythrobacter sp. (strain OCh 114))).